The sequence spans 171 residues: Pro-corazonin (171 aa).

A signal peptide spans M1–A20. Residue Q21 is modified to Pyrrolidone carboxylic acid. N31 bears the Asparagine amide mark. Positions F82–A171 are excised as a propeptide.

The protein belongs to the corazonin family.

It is found in the secreted. In terms of biological role, cardioactive peptide. Corazonin is probably involved in the physiological regulation of the heart beat. This Anopheles gambiae (African malaria mosquito) protein is Pro-corazonin.